Reading from the N-terminus, the 78-residue chain is D-alanyl carrier protein (78 aa).

Residues 1 to 78 (MDVENTVVEI…KIIAKAKELQ (78 aa)) form the Carrier domain. Ser-36 is subject to O-(pantetheine 4'-phosphoryl)serine.

The protein belongs to the DltC family. 4'-phosphopantetheine is transferred from CoA to a specific serine of apo-DCP.

The protein localises to the cytoplasm. It participates in cell wall biogenesis; lipoteichoic acid biosynthesis. Its function is as follows. Carrier protein involved in the D-alanylation of lipoteichoic acid (LTA). The loading of thioester-linked D-alanine onto DltC is catalyzed by D-alanine--D-alanyl carrier protein ligase DltA. The DltC-carried D-alanyl group is further transferred to cell membrane phosphatidylglycerol (PG) by forming an ester bond, probably catalyzed by DltD. D-alanylation of LTA plays an important role in modulating the properties of the cell wall in Gram-positive bacteria, influencing the net charge of the cell wall. In Latilactobacillus sakei subsp. sakei (strain 23K) (Lactobacillus sakei subsp. sakei), this protein is D-alanyl carrier protein.